A 125-amino-acid polypeptide reads, in one-letter code: Small ribosomal subunit protein eS6 (125 aa).

Belongs to the eukaryotic ribosomal protein eS6 family.

The chain is Small ribosomal subunit protein eS6 from Pyrococcus abyssi (strain GE5 / Orsay).